Here is a 674-residue protein sequence, read N- to C-terminus: UvrABC system protein C (674 aa).

One can recognise a GIY-YIG domain in the interval 64-142; the sequence is NGPGVYRMLN…IKRLRPRFNV (79 aa). A UVR domain is found at 252–287; that stretch reads QAVKATIASAMAEASENLDFERAALYRDRLAALSHV.

This sequence belongs to the UvrC family. Interacts with UvrB in an incision complex.

It is found in the cytoplasm. The UvrABC repair system catalyzes the recognition and processing of DNA lesions. UvrC both incises the 5' and 3' sides of the lesion. The N-terminal half is responsible for the 3' incision and the C-terminal half is responsible for the 5' incision. This chain is UvrABC system protein C, found in Rhizobium meliloti (strain 1021) (Ensifer meliloti).